Consider the following 971-residue polypeptide: U2 snRNP component HSH155 (971 aa).

Disordered regions lie at residues 1–22 (MSHPIQFVNANNSDKSHQLGGQ) and 54–118 (TRTV…AVKE). Positions 8 to 22 (VNANNSDKSHQLGGQ) are enriched in polar residues. A compositionally biased stretch (basic and acidic residues) spans 54–75 (TRTVQNREDSYHKRRFDMKFEP). Polar residues predominate over residues 78–90 (DTQTVTSSENTQD). 9 HEAT repeats span residues 199–237 (MIFNRLLPILLDRSLEDQERHLMIKTIDRVLYQLGDLTK), 273–310 (AGLKTILTVMRPDIENEDEYVRNVTSRAAAVVAKALGV), 350–387 (NHLTGLMSCIKDCLMDDHVPVRIVTAHTLSTLAENSYP), 513–550 (LGCSYTIDKLLTPLRDEAEPFRTMAVHAVTRTVNLLGT), 596–633 (PFLAPIVSTILNHLKHKTPLVRQHAADLCAILIPVIKN), 680–717 (PPINQILPTLTPILRNKHRKVEVNTIKFVGLIGKLAPT), 722–759 (KEWMRICFELLELLKSTNKEIRRSANATFGFIAEAIGP), 792–829 (CGPYNVLPVIMNEYTTPETNVQNGVLKAMSFMFEYIGN), and 832–870 (KDYIYFITPLLEDALTDRDLVHRQTASNVITHLALNCSG).

The protein belongs to the SF3B1 family. In terms of assembly, belongs to the CWC complex (or CEF1-associated complex), a spliceosome sub-complex reminiscent of a late-stage spliceosome composed of the U2, U5 and U6 snRNAs and at least BUD13, BUD31, BRR2, CDC40, CEF1, CLF1, CUS1, CWC2, CWC15, CWC21, CWC22, CWC23, CWC24, CWC25, CWC27, ECM2, HSH155, IST3, ISY1, LEA1, MSL1, NTC20, PRP8, PRP9, PRP11, PRP19, PRP21, PRP22, PRP45, PRP46, SLU7, SMB1, SMD1, SMD2, SMD3, SMX2, SMX3, SNT309, SNU114, SPP2, SYF1, SYF2, RSE1 and YJU2. Interacts with RDS3.

It localises to the nucleus. Functionally, contacts pre-mRNA on both sides of the branch site early in spliceosome assembly. In Saccharomyces cerevisiae (strain ATCC 204508 / S288c) (Baker's yeast), this protein is U2 snRNP component HSH155 (HSH155).